We begin with the raw amino-acid sequence, 353 residues long: NADH-quinone oxidoreductase subunit H (353 aa).

The next 9 membrane-spanning stretches (helical) occupy residues 8-28 (LLVYLVILFGFVIVSVLLFIW), 75-95 (GVFWLAPLVAFVPVMLMFAAI), 108-128 (IGILYILAVSSVTVIGIFMAG), 148-168 (VSYEIPLVLSILGVVMLTGSL), 178-198 (SVPFVLLQPLGFFVYLSAAMA), 229-249 (LFYLMEYAEVLAISAIATTLF), 258-278 (LHPVIWFITKVLIIFMFIIWV), 297-317 (FLLPLSLANLVITAFEILAAP), and 319-339 (MNTAVLIGINIAVMFGLILLF).

This sequence belongs to the complex I subunit 1 family. In terms of assembly, NDH-1 is composed of 14 different subunits. Subunits NuoA, H, J, K, L, M, N constitute the membrane sector of the complex.

It localises to the cell membrane. The catalysed reaction is a quinone + NADH + 5 H(+)(in) = a quinol + NAD(+) + 4 H(+)(out). Functionally, NDH-1 shuttles electrons from NADH, via FMN and iron-sulfur (Fe-S) centers, to quinones in the respiratory chain. The immediate electron acceptor for the enzyme in this species is believed to be ubiquinone. Couples the redox reaction to proton translocation (for every two electrons transferred, four hydrogen ions are translocated across the cytoplasmic membrane), and thus conserves the redox energy in a proton gradient. This subunit may bind ubiquinone. The polypeptide is NADH-quinone oxidoreductase subunit H (Dehalococcoides mccartyi (strain ATCC BAA-2266 / KCTC 15142 / 195) (Dehalococcoides ethenogenes (strain 195))).